Reading from the N-terminus, the 357-residue chain is DNA replication and repair protein RecF (357 aa).

31 to 38 lines the ATP pocket; it reads GQNGAGKT.

The protein belongs to the RecF family.

The protein localises to the cytoplasm. Functionally, the RecF protein is involved in DNA metabolism; it is required for DNA replication and normal SOS inducibility. RecF binds preferentially to single-stranded, linear DNA. It also seems to bind ATP. This chain is DNA replication and repair protein RecF, found in Coxiella burnetii (strain CbuG_Q212) (Coxiella burnetii (strain Q212)).